A 295-amino-acid polypeptide reads, in one-letter code: Nucleotide-binding protein SSU98_0619 (295 aa).

12–19 (GMSGAGKT) provides a ligand contact to ATP. GTP is bound at residue 62–65 (DMRS).

Belongs to the RapZ-like family.

Displays ATPase and GTPase activities. In Streptococcus suis (strain 98HAH33), this protein is Nucleotide-binding protein SSU98_0619.